The chain runs to 399 residues: Bombesin receptor subtype-3 (399 aa).

The Extracellular portion of the chain corresponds to 1 to 41 (MSQKQPQSPNQTLISITNDTESSSSVVSNDTTNKGWTGDNS). N-linked (GlcNAc...) asparagine glycans are attached at residues Asn10 and Asn18. Residues 42 to 63 (PGIEALCAIYITYAVIISVGIL) traverse the membrane as a helical segment. Residues 64 to 82 (GNAILIKVFFKTKSMQTVP) lie on the Cytoplasmic side of the membrane. The helical transmembrane segment at 83-103 (NIFITSLALGDLLLLLTCVPV) threads the bilayer. Residues 104 to 121 (DATHYLAEGWLFGRIGCK) are Extracellular-facing. A disulfide bridge connects residues Cys120 and Cys203. Residues 122 to 143 (VLSFIRLTSVGVSVFTLTILSA) traverse the membrane as a helical segment. Over 144–163 (DRYKAVVKPLERQPSNAILK) the chain is Cytoplasmic. A helical transmembrane segment spans residues 164–184 (TCAKAGCIWIMSMIFALPEAI). Residues 185 to 220 (FSNVHTLRDPNKNMTSEWCAFYPVSEKLLQEIHALL) lie on the Extracellular side of the membrane. The helical transmembrane segment at 221 to 241 (SFLVFYIIPLSIISVYYSLIA) threads the bilayer. At 242 to 272 (RTLYKSTLNIPTEEQSHARKQVESRKRIAKT) the chain is on the cytoplasmic side. Residues 273–293 (VLVLVALFALCWLPNHLLNLY) traverse the membrane as a helical segment. Topologically, residues 294–313 (HSFTHKAYEDSSAIHFIVTI) are extracellular. A helical transmembrane segment spans residues 314 to 333 (FSRVLAFSNSCVNPFALYWL). Residues 334-399 (SKTFQKQFKA…RPMKKEENRV (66 aa)) lie on the Cytoplasmic side of the membrane. Cys347 carries the S-palmitoyl cysteine lipid modification.

It belongs to the G-protein coupled receptor 1 family. Interacts with C6orf89. As to expression, mainly in uteri of pregnant animals.

It is found in the cell membrane. Role in sperm cell division, maturation, or function. The relative order of ligand affinity is GRP = neuromedin-C &gt;&gt; neuromedin-B. This receptor mediates its action by association with G proteins that activate a phosphatidylinositol-calcium second messenger system. This Cavia porcellus (Guinea pig) protein is Bombesin receptor subtype-3 (BRS3).